The sequence spans 835 residues: Phenylalanine--tRNA ligase beta subunit (835 aa).

One can recognise a tRNA-binding domain in the interval Pro-44–Arg-160. The 76-residue stretch at Pro-419–Thr-494 folds into the B5 domain. Residues Asp-472, Asp-478, Glu-481, and Glu-482 each coordinate Mg(2+). The region spanning Ser-741–Arg-834 is the FDX-ACB domain.

It belongs to the phenylalanyl-tRNA synthetase beta subunit family. Type 1 subfamily. As to quaternary structure, tetramer of two alpha and two beta subunits. The cofactor is Mg(2+).

It is found in the cytoplasm. It catalyses the reaction tRNA(Phe) + L-phenylalanine + ATP = L-phenylalanyl-tRNA(Phe) + AMP + diphosphate + H(+). The sequence is that of Phenylalanine--tRNA ligase beta subunit from Corynebacterium glutamicum (strain ATCC 13032 / DSM 20300 / JCM 1318 / BCRC 11384 / CCUG 27702 / LMG 3730 / NBRC 12168 / NCIMB 10025 / NRRL B-2784 / 534).